The sequence spans 219 residues: Transcriptional regulatory protein QseB (219 aa).

Residues 2 to 116 (RILLVEDDTL…EVAARLEALV (115 aa)) enclose the Response regulatory domain. At D51 the chain carries 4-aspartylphosphate. The segment at residues 124–218 (SSELRHGQVT…VHGIGYTLGD (95 aa)) is a DNA-binding region (ompR/PhoB-type).

In terms of processing, phosphorylated by QseC.

The protein localises to the cytoplasm. Its function is as follows. Member of a two-component regulatory system QseB/QseC. Activates the flagella regulon by activating transcription of flhDC. This Salmonella typhimurium (strain LT2 / SGSC1412 / ATCC 700720) protein is Transcriptional regulatory protein QseB (qseB).